The sequence spans 217 residues: LexA repressor (217 aa).

The H-T-H motif DNA-binding region spans 28–48 (RAEIAAEFGFSSPNAAEEHLR). Active-site for autocatalytic cleavage activity residues include Ser136 and Lys173.

Belongs to the peptidase S24 family. In terms of assembly, homodimer.

The catalysed reaction is Hydrolysis of Ala-|-Gly bond in repressor LexA.. Represses a number of genes involved in the response to DNA damage (SOS response), including recA and lexA. In the presence of single-stranded DNA, RecA interacts with LexA causing an autocatalytic cleavage which disrupts the DNA-binding part of LexA, leading to derepression of the SOS regulon and eventually DNA repair. The protein is LexA repressor of Cupriavidus taiwanensis (strain DSM 17343 / BCRC 17206 / CCUG 44338 / CIP 107171 / LMG 19424 / R1) (Ralstonia taiwanensis (strain LMG 19424)).